Consider the following 194-residue polypeptide: E3 ubiquitin-protein ligase RNF4 (194 aa).

The segment covering 1-12 has biased composition (basic residues); sequence MSTRNPQRKRRG. Residues 1–20 form a required for ubiquitination activity region; it reads MSTRNPQRKRRGGTVNSRQT. A disordered region spans residues 1–39; that stretch reads MSTRNPQRKRRGGTVNSRQTQKRTRETTSTPEVSLETEP. Positions 6–65 are mediates interaction with TRPS1; it reads PQRKRRGGTVNSRQTQKRTRETTSTPEVSLETEPIELVETVGDEIVDLTCESLEPVVVDL. The SUMO interaction motif 1; mediates the binding to polysumoylated substrates motif lies at 40–43; sequence IELV. Residues 50–53 carry the SUMO interaction motif 2; mediates the binding to polysumoylated substrates motif; it reads IVDL. An SUMO interaction motif 3; mediates the binding to polysumoylated substrates motif is present at residues 61–63; that stretch reads VVV. Positions 71 to 74 match the SUMO interaction motif 4; mediates the binding to polysumoylated substrates motif; the sequence is VVIV. Residues serine 98 and serine 99 each carry the phosphoserine modification. The segment at 110–130 is disordered; the sequence is VYVTTHTPRSTKDDGATGPRP. Cysteine 136, cysteine 139, cysteine 158, histidine 160, cysteine 163, cysteine 166, cysteine 177, and cysteine 180 together coordinate Zn(2+). The RING-type zinc-finger motif lies at 136–181; sequence CPICMDGYSEIVQNGRLIVSTECGHVFCSQCLRDSLKNANTCPTCR.

Homodimer (via RING-type zinc finger domain). Interacts with GSC2. Interacts with AR/the androgen receptor and TBP. Interacts with TCF20. Interacts with PATZ1. Interacts with TRPS1; negatively regulates TRPS1 transcriptional repressor activity. Interacts with PML (isoform PML-1, isoform PML-2, isoform PML-3, isoform PML-4, isoform PML-5 and isoform PML-6). Interacts with PRDM1/Blimp-1. Post-translationally, sumoylated; conjugated by one or two SUMO1 moieties. Autoubiquitinated. In terms of tissue distribution, in the embryo, expressed primarily in the developing nervous system with strong expression in the dorsal root ganglia and gonads. Ubiquitously expressed in the adult.

Its subcellular location is the cytoplasm. The protein resides in the nucleus. It localises to the PML body. The catalysed reaction is S-ubiquitinyl-[E2 ubiquitin-conjugating enzyme]-L-cysteine + [acceptor protein]-L-lysine = [E2 ubiquitin-conjugating enzyme]-L-cysteine + N(6)-ubiquitinyl-[acceptor protein]-L-lysine.. It participates in protein modification; protein ubiquitination. E3 ubiquitin-protein ligase which binds polysumoylated chains covalently attached to proteins and mediates 'Lys-6'-, 'Lys-11'-, 'Lys-48'- and 'Lys-63'-linked polyubiquitination of those substrates and their subsequent targeting to the proteasome for degradation. Regulates the degradation of several proteins including PML and the transcriptional activator PEA3. Involved in chromosome alignment and spindle assembly, it regulates the kinetochore CENPH-CENPI-CENPK complex by targeting polysumoylated CENPI to proteasomal degradation. Regulates the cellular responses to hypoxia and heat shock through degradation of respectively EPAS1 and PARP1. Alternatively, it may also bind DNA/nucleosomes and have a more direct role in the regulation of transcription for instance enhancing basal transcription and steroid receptor-mediated transcriptional activation. Catalyzes ubiquitination of sumoylated PARP1 in response to PARP1 trapping to chromatin, leading to PARP1 removal from chromatin by VCP/p97. This is E3 ubiquitin-protein ligase RNF4 from Mus musculus (Mouse).